Here is a 200-residue protein sequence, read N- to C-terminus: MSKYAGIVLAGGMSSRFGEPKALASWQGGTFIEHILKVMTSTLQEVVVISHSDIKERVEKLVQVPVIEDIPHYKGNGPLAGIVSGMEYIEADWYAIMPCDAPNVSHEWFTILLGQTSNEYDAVVPIINGRKQPLLAAYHNRVKEKIYALLQEEKRSMVQLLSQCNVKYIAGEDVQANADWFINVNTKEEYVQAQKDLSNE.

GTP is bound by residues 9-11 (LAG), lysine 21, aspartate 69, and aspartate 100. Residue aspartate 100 participates in Mg(2+) binding.

It belongs to the MobA family. It depends on Mg(2+) as a cofactor.

Its subcellular location is the cytoplasm. The catalysed reaction is Mo-molybdopterin + GTP + H(+) = Mo-molybdopterin guanine dinucleotide + diphosphate. Functionally, transfers a GMP moiety from GTP to Mo-molybdopterin (Mo-MPT) cofactor (Moco or molybdenum cofactor) to form Mo-molybdopterin guanine dinucleotide (Mo-MGD) cofactor. The chain is Probable molybdenum cofactor guanylyltransferase from Bacillus thuringiensis (strain Al Hakam).